Consider the following 214-residue polypeptide: Thiamine-phosphate synthase (214 aa).

4-amino-2-methyl-5-(diphosphooxymethyl)pyrimidine contacts are provided by residues 37–41 (QYREK) and Asn73. Residues Asp74 and Asp93 each coordinate Mg(2+). Position 112 (Ser112) interacts with 4-amino-2-methyl-5-(diphosphooxymethyl)pyrimidine. A 2-[(2R,5Z)-2-carboxy-4-methylthiazol-5(2H)-ylidene]ethyl phosphate-binding site is contributed by 139-141 (TIS). Lys142 serves as a coordination point for 4-amino-2-methyl-5-(diphosphooxymethyl)pyrimidine. Residues Gly171 and 191–192 (IS) contribute to the 2-[(2R,5Z)-2-carboxy-4-methylthiazol-5(2H)-ylidene]ethyl phosphate site.

Belongs to the thiamine-phosphate synthase family. Mg(2+) serves as cofactor.

It carries out the reaction 2-[(2R,5Z)-2-carboxy-4-methylthiazol-5(2H)-ylidene]ethyl phosphate + 4-amino-2-methyl-5-(diphosphooxymethyl)pyrimidine + 2 H(+) = thiamine phosphate + CO2 + diphosphate. The catalysed reaction is 2-(2-carboxy-4-methylthiazol-5-yl)ethyl phosphate + 4-amino-2-methyl-5-(diphosphooxymethyl)pyrimidine + 2 H(+) = thiamine phosphate + CO2 + diphosphate. The enzyme catalyses 4-methyl-5-(2-phosphooxyethyl)-thiazole + 4-amino-2-methyl-5-(diphosphooxymethyl)pyrimidine + H(+) = thiamine phosphate + diphosphate. Its pathway is cofactor biosynthesis; thiamine diphosphate biosynthesis; thiamine phosphate from 4-amino-2-methyl-5-diphosphomethylpyrimidine and 4-methyl-5-(2-phosphoethyl)-thiazole: step 1/1. Condenses 4-methyl-5-(beta-hydroxyethyl)thiazole monophosphate (THZ-P) and 2-methyl-4-amino-5-hydroxymethyl pyrimidine pyrophosphate (HMP-PP) to form thiamine monophosphate (TMP). The chain is Thiamine-phosphate synthase from Listeria monocytogenes serotype 4a (strain HCC23).